A 155-amino-acid chain; its full sequence is MSRKGSTPQRNVLPDPKYGSETIARFINMVMKSGKKSVAEKIVYGAMNVIGEKNSNAIELLQKALDNVSPAVEVKSRRVGGATYQVPVEVRASRRMALAMRWLIDSSRKRGENSMPRKLAAELLDASESRGGAIKKREETHRMAEANKAFAHYRW.

It belongs to the universal ribosomal protein uS7 family. As to quaternary structure, part of the 30S ribosomal subunit. Contacts proteins S9 and S11.

Its function is as follows. One of the primary rRNA binding proteins, it binds directly to 16S rRNA where it nucleates assembly of the head domain of the 30S subunit. Is located at the subunit interface close to the decoding center, probably blocks exit of the E-site tRNA. The sequence is that of Small ribosomal subunit protein uS7 from Xylella fastidiosa (strain M12).